Reading from the N-terminus, the 192-residue chain is MGVPERPTLLLLLSLLLLPLGLPVLCAPPRLICDGRVLERYILEAREAENVTMGCAEGPRLSENITVPDTKVNFNAWKRMEVQEQAVEVWQGLSLLSEAILRGQALLANSSQPSGMLQLHIDKAISGLRSLTSLLRVLGAQKESISPPDATPPAPLRTLMVENFCKLFRVYSNFLRGKLKLYTGEACRRGDR.

The first 26 residues, 1–26, serve as a signal peptide directing secretion; that stretch reads MGVPERPTLLLLLSLLLLPLGLPVLC. Cys-33 and Cys-187 are joined by a disulfide. Asn-50, Asn-64, and Asn-109 each carry an N-linked (GlcNAc...) asparagine glycan.

The protein belongs to the EPO/TPO family. As to expression, produced by kidney or liver of adult mammals and by liver of fetal or neonatal mammals.

Its subcellular location is the secreted. Hormone involved in the regulation of erythrocyte proliferation and differentiation and the maintenance of a physiological level of circulating erythrocyte mass. Binds to EPOR leading to EPOR dimerization and JAK2 activation thereby activating specific downstream effectors, including STAT1 and STAT3. In Alexandromys oeconomus (Tundra vole), this protein is Erythropoietin (EPO).